The primary structure comprises 738 residues: Outer membrane protein assembly factor BamA (738 aa).

A signal peptide spans 1–13 (MVWLLFLSSFCFA). 5 POTRA domains span residues 14 to 81 (DEVV…LQEN), 82 to 159 (PILR…VKEA), 162 to 248 (TVIR…LKEG), 251 to 329 (YSFG…VVST), and 332 to 404 (YRIR…VKER).

Belongs to the BamA family. Part of the Bam complex.

It localises to the cell outer membrane. In terms of biological role, part of the outer membrane protein assembly complex, which is involved in assembly and insertion of beta-barrel proteins into the outer membrane. The protein is Outer membrane protein assembly factor BamA of Neorickettsia risticii (strain Illinois).